A 164-amino-acid polypeptide reads, in one-letter code: Phosphopantetheine adenylyltransferase (164 aa).

Position 10 (serine 10) interacts with substrate. ATP contacts are provided by residues 10-11 (SF) and histidine 18. Residues lysine 42, threonine 79, and arginine 93 each coordinate substrate. ATP-binding positions include 94 to 96 (GLR), glutamate 104, and 129 to 135 (VRPITAS).

Belongs to the bacterial CoaD family. As to quaternary structure, homohexamer. Mg(2+) is required as a cofactor.

It localises to the cytoplasm. The catalysed reaction is (R)-4'-phosphopantetheine + ATP + H(+) = 3'-dephospho-CoA + diphosphate. Its pathway is cofactor biosynthesis; coenzyme A biosynthesis; CoA from (R)-pantothenate: step 4/5. Reversibly transfers an adenylyl group from ATP to 4'-phosphopantetheine, yielding dephospho-CoA (dPCoA) and pyrophosphate. The sequence is that of Phosphopantetheine adenylyltransferase from Bradyrhizobium sp. (strain ORS 278).